Reading from the N-terminus, the 200-residue chain is LexA repressor (200 aa).

Residues arginine 28 to lysine 48 constitute a DNA-binding region (H-T-H motif). Active-site for autocatalytic cleavage activity residues include serine 118 and lysine 155.

It belongs to the peptidase S24 family. Homodimer.

The enzyme catalyses Hydrolysis of Ala-|-Gly bond in repressor LexA.. Its function is as follows. Represses a number of genes involved in the response to DNA damage (SOS response), including recA and lexA. In the presence of single-stranded DNA, RecA interacts with LexA causing an autocatalytic cleavage which disrupts the DNA-binding part of LexA, leading to derepression of the SOS regulon and eventually DNA repair. In Cellvibrio japonicus (strain Ueda107) (Pseudomonas fluorescens subsp. cellulosa), this protein is LexA repressor.